The sequence spans 928 residues: Outer membrane protein SlpA (928 aa).

The signal sequence occupies residues 1 to 23 (MKKRLVTLLAGLLTVLSMGFGLA). Residues 24–84 (QFSDVPAGHW…QQIEEELKTQ (61 aa)) enclose the SLH domain.

In terms of assembly, homotrimer.

The protein resides in the cell outer membrane. Functionally, plays an important role in the structural organization and integrity of the cell envelope, bridging the outer membrane to the peptidoglyan layer. Appears to be a nonselective channel. The chain is Outer membrane protein SlpA (slpA) from Thermus thermophilus (strain ATCC 27634 / DSM 579 / HB8).